The primary structure comprises 873 residues: Valine--tRNA ligase (873 aa).

Residues 46–56 carry the 'HIGH' region motif; the sequence is PNVTGKLHIGH. The 'KMSKS' region motif lies at 525 to 529; the sequence is KMSKS. An ATP-binding site is contributed by Lys-528. The stretch at 804–873 forms a coiled coil; it reads NDDFIDKEKM…ELIQDKLNKM (70 aa).

It belongs to the class-I aminoacyl-tRNA synthetase family. ValS type 1 subfamily. As to quaternary structure, monomer.

Its subcellular location is the cytoplasm. It catalyses the reaction tRNA(Val) + L-valine + ATP = L-valyl-tRNA(Val) + AMP + diphosphate. In terms of biological role, catalyzes the attachment of valine to tRNA(Val). As ValRS can inadvertently accommodate and process structurally similar amino acids such as threonine, to avoid such errors, it has a 'posttransfer' editing activity that hydrolyzes mischarged Thr-tRNA(Val) in a tRNA-dependent manner. This chain is Valine--tRNA ligase, found in Mesoplasma florum (strain ATCC 33453 / NBRC 100688 / NCTC 11704 / L1) (Acholeplasma florum).